The sequence spans 341 residues: Holliday junction branch migration complex subunit RuvB (341 aa).

The tract at residues 1–182 (MTERFVTPDF…FGVICRLEFY (182 aa)) is large ATPase domain (RuvB-L). ATP is bound by residues L21, R22, G63, K66, T67, T68, 129-131 (EDY), R172, Y182, and R219. T67 is a Mg(2+) binding site. A small ATPAse domain (RuvB-S) region spans residues 183–253 (TDDELATIAG…IADMALSRLE (71 aa)). The segment at 256-341 (NCGLDHMDRL…RGKTSGELFS (86 aa)) is head domain (RuvB-H). DNA-binding residues include R311 and R316.

Belongs to the RuvB family. As to quaternary structure, homohexamer. Forms an RuvA(8)-RuvB(12)-Holliday junction (HJ) complex. HJ DNA is sandwiched between 2 RuvA tetramers; dsDNA enters through RuvA and exits via RuvB. An RuvB hexamer assembles on each DNA strand where it exits the tetramer. Each RuvB hexamer is contacted by two RuvA subunits (via domain III) on 2 adjacent RuvB subunits; this complex drives branch migration. In the full resolvosome a probable DNA-RuvA(4)-RuvB(12)-RuvC(2) complex forms which resolves the HJ.

The protein resides in the cytoplasm. It carries out the reaction ATP + H2O = ADP + phosphate + H(+). Functionally, the RuvA-RuvB-RuvC complex processes Holliday junction (HJ) DNA during genetic recombination and DNA repair, while the RuvA-RuvB complex plays an important role in the rescue of blocked DNA replication forks via replication fork reversal (RFR). RuvA specifically binds to HJ cruciform DNA, conferring on it an open structure. The RuvB hexamer acts as an ATP-dependent pump, pulling dsDNA into and through the RuvAB complex. RuvB forms 2 homohexamers on either side of HJ DNA bound by 1 or 2 RuvA tetramers; 4 subunits per hexamer contact DNA at a time. Coordinated motions by a converter formed by DNA-disengaged RuvB subunits stimulates ATP hydrolysis and nucleotide exchange. Immobilization of the converter enables RuvB to convert the ATP-contained energy into a lever motion, pulling 2 nucleotides of DNA out of the RuvA tetramer per ATP hydrolyzed, thus driving DNA branch migration. The RuvB motors rotate together with the DNA substrate, which together with the progressing nucleotide cycle form the mechanistic basis for DNA recombination by continuous HJ branch migration. Branch migration allows RuvC to scan DNA until it finds its consensus sequence, where it cleaves and resolves cruciform DNA. The sequence is that of Holliday junction branch migration complex subunit RuvB from Syntrophotalea carbinolica (strain DSM 2380 / NBRC 103641 / GraBd1) (Pelobacter carbinolicus).